Here is a 91-residue protein sequence, read N- to C-terminus: Soluble cytochrome b558 (91 aa).

The 81-residue stretch at 8–88 (LPVFTLEQVA…LQRYLIGTLE (81 aa)) folds into the Cytochrome b5 heme-binding domain. A disulfide bridge connects residues cysteine 25 and cysteine 54. Histidine 43 and histidine 71 together coordinate heme.

This chain is Soluble cytochrome b558, found in Ectothiorhodospira shaposhnikovii (Ectothiorhodospira vacuolata).